Here is a 399-residue protein sequence, read N- to C-terminus: MRLTQMPSEFQKALPVLEKIKEAGFEAYFVGGSVRDALLHSPIHDVDIATSSYPEETKQIFPRTADIGIEHGTVLVLDGDEEYEVTTFRTEDVYVDYRRPSAVSFVRSLEEDLKRRDFTVNAFALDETGEIVDLFHGLEDLEKQVLRAVGVASERFNEDALRIMRGFRFQASLGFALEPETFKAMKTLTPLLEKISVERTFVEFDKLLLAPFWRRGLASMIESQAYDYLPDMASSQDKLNRLFDLETDFTFESSEQAWAALLWALEIENAQSFLKSWKTSRQFAKQVQDLLIILALRENGELSKRDCYRFDIDLLLQAENLRQAQGKEVNPQAITEKYQSLTIHDKKDIQINGGILIKEYGYQPGPDLGEILTEIEFAIVDGELENNREAIHAYLREKK.

Residues Gly-32 and Arg-35 each contribute to the ATP site. CTP is bound by residues Gly-32 and Arg-35. Mg(2+)-binding residues include Asp-45 and Asp-47. ATP contacts are provided by Arg-116, Asp-159, Arg-162, Arg-165, and Arg-168. Residues Arg-116, Asp-159, Arg-162, Arg-165, and Arg-168 each coordinate CTP.

This sequence belongs to the tRNA nucleotidyltransferase/poly(A) polymerase family. Bacterial CCA-adding enzyme type 3 subfamily. As to quaternary structure, homodimer. Requires Mg(2+) as cofactor.

The enzyme catalyses a tRNA precursor + 2 CTP + ATP = a tRNA with a 3' CCA end + 3 diphosphate. It catalyses the reaction a tRNA with a 3' CCA end + 2 CTP + ATP = a tRNA with a 3' CCACCA end + 3 diphosphate. Its function is as follows. Catalyzes the addition and repair of the essential 3'-terminal CCA sequence in tRNAs without using a nucleic acid template. Adds these three nucleotides in the order of C, C, and A to the tRNA nucleotide-73, using CTP and ATP as substrates and producing inorganic pyrophosphate. tRNA 3'-terminal CCA addition is required both for tRNA processing and repair. Also involved in tRNA surveillance by mediating tandem CCA addition to generate a CCACCA at the 3' terminus of unstable tRNAs. While stable tRNAs receive only 3'-terminal CCA, unstable tRNAs are marked with CCACCA and rapidly degraded. The protein is CCA-adding enzyme of Streptococcus pneumoniae (strain CGSP14).